The following is a 429-amino-acid chain: Serine hydroxymethyltransferase (429 aa).

Gly120–Ile122 contacts (6S)-5,6,7,8-tetrahydrofolate. An N6-(pyridoxal phosphate)lysine modification is found at Lys226.

Belongs to the SHMT family. Homodimer. Pyridoxal 5'-phosphate is required as a cofactor.

Its subcellular location is the cytoplasm. The catalysed reaction is 5,10-methylenetetrahydromethanopterin + glycine + H2O = 5,6,7,8-tetrahydromethanopterin + L-serine. The enzyme catalyses L-allo-threonine = acetaldehyde + glycine. It participates in amino-acid biosynthesis; glycine biosynthesis; glycine from L-serine: step 1/1. Catalyzes the reversible interconversion of serine and glycine with tetrahydromethanopterin (H4MPT) serving as the one-carbon carrier. The use of tetrahydrofolate (THF or H4PteGlu) as the pteridine substrate is 450-fold less efficient than that of H4MPT. Also exhibits a pteridine-independent aldolase activity toward beta-hydroxyamino acids, producing glycine and aldehydes, via a retro-aldol mechanism. Thus, is able to catalyze the cleavage of L-allo-threonine and L-threo-beta-phenylserine. The polypeptide is Serine hydroxymethyltransferase (Methanocaldococcus jannaschii (strain ATCC 43067 / DSM 2661 / JAL-1 / JCM 10045 / NBRC 100440) (Methanococcus jannaschii)).